The following is a 148-amino-acid chain: Ribosomal RNA large subunit methyltransferase H (148 aa).

Residues Leu62, Gly94, and 113 to 118 contribute to the S-adenosyl-L-methionine site; that span reads LSLLTL.

This sequence belongs to the RNA methyltransferase RlmH family. Homodimer.

The protein localises to the cytoplasm. It carries out the reaction pseudouridine(1915) in 23S rRNA + S-adenosyl-L-methionine = N(3)-methylpseudouridine(1915) in 23S rRNA + S-adenosyl-L-homocysteine + H(+). Specifically methylates the pseudouridine at position 1915 (m3Psi1915) in 23S rRNA. This Deinococcus geothermalis (strain DSM 11300 / CIP 105573 / AG-3a) protein is Ribosomal RNA large subunit methyltransferase H.